The primary structure comprises 463 residues: Sodium-coupled neutral amino acid transporter 7 (463 aa).

The residue at position 28 (serine 28) is a Phosphoserine. A run of 11 helical transmembrane segments spans residues 56–76 (AVFI…PAAF), 82–102 (VAAG…GLVI), 130–150 (LCEI…LIII), 179–199 (FTIS…KEIG), 206–226 (SLSV…YIWP), 240–260 (ASWM…QCHV), 283–303 (AAMV…FLTF), 320–340 (VAVA…YPIL), 372–392 (VLQT…IPDI), 396–416 (ISVI…LCLI), and 429–449 (ASWW…AFIF).

The protein belongs to the amino acid/polyamine transporter 2 family. As to quaternary structure, interacts with the mTORC1 complex; this interaction mediates the recruitment of mTORC1 to the lysosome and its subsequent activation.

It is found in the lysosome membrane. The protein localises to the cell projection. The protein resides in the axon. The enzyme catalyses L-asparagine(in) + Na(+)(in) = L-asparagine(out) + Na(+)(out). It catalyses the reaction L-glutamine(in) + Na(+)(in) = L-glutamine(out) + Na(+)(out). In terms of biological role, symporter that selectively cotransports sodium ions and amino acids, such as L-glutamine and L-asparagine from the lysosome into the cytoplasm and may participates in mTORC1 activation. The transport activity requires an acidic lysosomal lumen. The polypeptide is Sodium-coupled neutral amino acid transporter 7 (Rattus norvegicus (Rat)).